The chain runs to 277 residues: Thymidylate synthase (277 aa).

Arginine 21 provides a ligand contact to dUMP. (6R)-5,10-methylene-5,6,7,8-tetrahydrofolate is bound at residue histidine 51. Residue 126 to 127 (RR) coordinates dUMP. Cysteine 159 functions as the Nucleophile in the catalytic mechanism. Residues 179-182 (RSAD), asparagine 190, and 220-222 (HLY) each bind dUMP. Aspartate 182 lines the (6R)-5,10-methylene-5,6,7,8-tetrahydrofolate pocket. Serine 276 contributes to the (6R)-5,10-methylene-5,6,7,8-tetrahydrofolate binding site.

It belongs to the thymidylate synthase family. Bacterial-type ThyA subfamily. As to quaternary structure, homodimer.

The protein resides in the cytoplasm. It catalyses the reaction dUMP + (6R)-5,10-methylene-5,6,7,8-tetrahydrofolate = 7,8-dihydrofolate + dTMP. It participates in pyrimidine metabolism; dTTP biosynthesis. Catalyzes the reductive methylation of 2'-deoxyuridine-5'-monophosphate (dUMP) to 2'-deoxythymidine-5'-monophosphate (dTMP) while utilizing 5,10-methylenetetrahydrofolate (mTHF) as the methyl donor and reductant in the reaction, yielding dihydrofolate (DHF) as a by-product. This enzymatic reaction provides an intracellular de novo source of dTMP, an essential precursor for DNA biosynthesis. This Saccharophagus degradans (strain 2-40 / ATCC 43961 / DSM 17024) protein is Thymidylate synthase.